The chain runs to 414 residues: Gamma-glutamyl phosphate reductase (414 aa).

The protein belongs to the gamma-glutamyl phosphate reductase family.

It is found in the cytoplasm. It catalyses the reaction L-glutamate 5-semialdehyde + phosphate + NADP(+) = L-glutamyl 5-phosphate + NADPH + H(+). The protein operates within amino-acid biosynthesis; L-proline biosynthesis; L-glutamate 5-semialdehyde from L-glutamate: step 2/2. Its function is as follows. Catalyzes the NADPH-dependent reduction of L-glutamate 5-phosphate into L-glutamate 5-semialdehyde and phosphate. The product spontaneously undergoes cyclization to form 1-pyrroline-5-carboxylate. The sequence is that of Gamma-glutamyl phosphate reductase from Bacillus anthracis (strain A0248).